Consider the following 402-residue polypeptide: B3 domain-containing protein LFL1 (402 aa).

The segment at 1 to 174 is disordered; the sequence is MRGEERWQEQ…AAPRPSSHHT (174 aa). The segment covering 74–87 has biased composition (low complexity); it reads ARPPTLAASAAAAS. The segment covering 88-102 has biased composition (pro residues); the sequence is SPPPPPPPPIPPLPP. Low complexity-rich tracts occupy residues 103–139 and 156–169; these read STST…AAVS and PRPA…APRP. The TF-B3 DNA-binding region spans 181–284; sequence LQKELRYSDV…RFVIGAKKAG (104 aa). Residues 381–402 are disordered; that stretch reads LHVTDDKSGHSLIPNPKSGPHM.

Expressed in anthers, pollen grains and young developing embryos.

The protein resides in the nucleus. Its function is as follows. Transcription repressor involved in flowering time regulation. Represses the flowering activator EHD1 by binding specifically to the DNA sequence 5'-CATGCATG-3 of its promoter. This chain is B3 domain-containing protein LFL1 (LFL1), found in Oryza sativa subsp. japonica (Rice).